The primary structure comprises 345 residues: Succinylglutamate desuccinylase (345 aa).

Zn(2+)-binding residues include His-63, Glu-66, and His-160. Residue Glu-224 is part of the active site.

The protein belongs to the AspA/AstE family. Succinylglutamate desuccinylase subfamily. Requires Zn(2+) as cofactor.

It catalyses the reaction N-succinyl-L-glutamate + H2O = L-glutamate + succinate. Its pathway is amino-acid degradation; L-arginine degradation via AST pathway; L-glutamate and succinate from L-arginine: step 5/5. Its function is as follows. Transforms N(2)-succinylglutamate into succinate and glutamate. The polypeptide is Succinylglutamate desuccinylase (Shewanella woodyi (strain ATCC 51908 / MS32)).